Reading from the N-terminus, the 537-residue chain is MARLLKAVTVCALAGIAHAFNYDQPYRGQYHFSPQKNWMNDPNGLLYHNGTYHLFFQYNPGGIEWGNISWGHATSEDLTHWEEQPVALLARGYGSDVTEMYFSGSAVADVNNTSGFGKDGKTPLVAMYTSYYPVAQTLPSGQTVQEDQQSQSIAYSLDDGLTWTTYDAANPVIPNPPQPYQAQYQNFRDPFVFWHDESHKWVVVTSIAELHKLAIYTSDNLKDWKLVSEFGPYNAQGGVWECPGLFKLPLDGGSSTKWVITSGLNPGGPPGTVGSGTQYFVGEFDGTTFTPDADTVYPGNSTANWMDWGPDFYAAAGYNGLSIKDHVHIGWMNNWQYGANIPTYPWRSAMAIPRHLALKTINNKTTLVQQPQEAWSSISSKHPLYSRTYSTFSEGSTNASTTGETFRVDLSFSATSKASTFAIALRASANFTEQTLAGYDFAKQQIFLDRTKSGDVSFDNTFASVYHGPLVPDSTGMVRLSIFVDRSSVEVFGGQGETTLTAQIFPSNDAVHARLVSTGGATEDVRVDVHNITSTWN.

A signal peptide spans Met-1–Ala-19. Asp-41 is a catalytic residue. Residues Asn-49, Asn-67, Asn-112, Asn-300, Asn-363, Asn-398, Asn-430, and Asn-531 are each glycosylated (N-linked (GlcNAc...) asparagine).

It belongs to the glycosyl hydrolase 32 family.

The protein localises to the secreted. It carries out the reaction Hydrolysis of terminal, non-reducing (2-&gt;1)- and (2-&gt;6)-linked beta-D-fructofuranose residues in fructans.. With respect to regulation, the catalytic activity is increased by manganese cathions, but strongly inhibited by other metal ions such as copper, aluminum, silver, iron, nickel, zinc and magnesium cathions. In terms of biological role, exo-inulinase involved in utilization of the plant storage polymer inulin, consisting of fructooligosaccharides with a degree of polymerization (DP) value from 2 to 60. Splits off terminal fructose units successively from the non-reducing end of the inulin molecule, and also hydrolyze sucrose and raffinose. The chain is Extracellular exo-inulinase inuE (exoI) from Aspergillus ficuum.